We begin with the raw amino-acid sequence, 176 residues long: Cystatin-related protein 1 (176 aa).

The signal sequence occupies residues 1-26; it reads MCKTLHGTLLLLAIFVLFLNFSHATA. A propeptide spanning residues 27–31 is cleaved from the precursor; it reads KRTRR. N-linked (GlcNAc...) asparagine glycosylation occurs at N71. Cystine bridges form between C129–C139 and C153–C173.

This sequence belongs to the cystatin family. Prostate and lacrimal gland.

This chain is Cystatin-related protein 1 (Andpro), found in Rattus norvegicus (Rat).